Reading from the N-terminus, the 297-residue chain is Protoheme IX farnesyltransferase (297 aa).

Transmembrane regions (helical) follow at residues 26–46 (VTQLAVFCAVIGMFLATPGMV), 48–68 (YPVLFGGIAGIWLLAGAAFAV), 96–116 (FHIIIFSIILGSLGMIILWNF), 120–140 (LTMWLTLATFVGYAVIYTWLL), 147–167 (NIVIGGLSGAMPPALGWAAVT), 174–194 (AWLLVLIIFVWTPPHFWALAL), 218–238 (LLNILLYTLILIAATLLPYIY), 243–263 (IIYLISAIVLGLMFLAYVIAL), and 276–296 (FRFSITYLSLLFAALLIDHYF).

This sequence belongs to the UbiA prenyltransferase family. Protoheme IX farnesyltransferase subfamily.

It localises to the cell membrane. It carries out the reaction heme b + (2E,6E)-farnesyl diphosphate + H2O = Fe(II)-heme o + diphosphate. The protein operates within porphyrin-containing compound metabolism; heme O biosynthesis; heme O from protoheme: step 1/1. Converts heme B (protoheme IX) to heme O by substitution of the vinyl group on carbon 2 of heme B porphyrin ring with a hydroxyethyl farnesyl side group. The chain is Protoheme IX farnesyltransferase from Polynucleobacter asymbioticus (strain DSM 18221 / CIP 109841 / QLW-P1DMWA-1) (Polynucleobacter necessarius subsp. asymbioticus).